Reading from the N-terminus, the 245-residue chain is Serine/arginine-rich splicing factor 1B (245 aa).

Residues 15–90 (CRIYVGNLPP…YRLRVEFPRS (76 aa)) form the RRM 1 domain. Disordered stretches follow at residues 89–116 (RSGRGGGRGGGGGGGVGAPRGRYGPPSR) and 192–245 (KVDG…RSRT). Residues 91–106 (GRGGGRGGGGGGGVGA) are compositionally biased toward gly residues. The RRM 2 domain maps to 120-194 (YRVIVSGLPP…ETAYIRVKVD (75 aa)). Basic residues predominate over residues 204-245 (SRSRSRSRSRSRSNSRSRSYSPRRSRGSPRYSPRHSRSRSRT).

The protein belongs to the splicing factor SR family.

The protein localises to the cytoplasm. It is found in the nucleus speckle. Its function is as follows. May play a role in preventing exon skipping, ensuring the accuracy of splicing and regulating alternative splicing. The protein is Serine/arginine-rich splicing factor 1B (srsf1b) of Danio rerio (Zebrafish).